Reading from the N-terminus, the 382-residue chain is Galactokinase (382 aa).

Position 34-37 (34-37) interacts with substrate; the sequence is EHTD. 124-130 provides a ligand contact to ATP; it reads GAGLSSS. Residues S130 and E162 each contribute to the Mg(2+) site. D174 acts as the Proton acceptor in catalysis. A substrate-binding site is contributed by Y223.

Belongs to the GHMP kinase family. GalK subfamily.

It is found in the cytoplasm. It catalyses the reaction alpha-D-galactose + ATP = alpha-D-galactose 1-phosphate + ADP + H(+). It functions in the pathway carbohydrate metabolism; galactose metabolism. Its function is as follows. Catalyzes the transfer of the gamma-phosphate of ATP to D-galactose to form alpha-D-galactose-1-phosphate (Gal-1-P). This is Galactokinase from Escherichia coli (strain SMS-3-5 / SECEC).